Reading from the N-terminus, the 122-residue chain is Large ribosomal subunit protein uL14 (122 aa).

It belongs to the universal ribosomal protein uL14 family. As to quaternary structure, part of the 50S ribosomal subunit. Forms a cluster with proteins L3 and L19. In the 70S ribosome, L14 and L19 interact and together make contacts with the 16S rRNA in bridges B5 and B8.

Its function is as follows. Binds to 23S rRNA. Forms part of two intersubunit bridges in the 70S ribosome. This is Large ribosomal subunit protein uL14 from Burkholderia multivorans (strain ATCC 17616 / 249).